The following is a 306-amino-acid chain: Ornithine carbamoyltransferase (306 aa).

Residues 53–56 (STRT), Gln80, Arg104, and 131–134 (HPCQ) each bind carbamoyl phosphate. Residues Asn162, Asp219, and 223–224 (SM) contribute to the L-ornithine site. Carbamoyl phosphate-binding positions include 259–260 (CL) and Arg287.

It belongs to the aspartate/ornithine carbamoyltransferase superfamily. OTCase family.

It is found in the cytoplasm. The enzyme catalyses carbamoyl phosphate + L-ornithine = L-citrulline + phosphate + H(+). Its pathway is amino-acid biosynthesis; L-arginine biosynthesis; L-arginine from L-ornithine and carbamoyl phosphate: step 1/3. Functionally, reversibly catalyzes the transfer of the carbamoyl group from carbamoyl phosphate (CP) to the N(epsilon) atom of ornithine (ORN) to produce L-citrulline. The protein is Ornithine carbamoyltransferase of Pseudomonas syringae pv. tomato (strain ATCC BAA-871 / DC3000).